The primary structure comprises 211 residues: Thiamine-phosphate synthase (211 aa).

4-amino-2-methyl-5-(diphosphooxymethyl)pyrimidine contacts are provided by residues 37 to 41 and Asn-69; that span reads QLRIK. 2 residues coordinate Mg(2+): Asp-70 and Asp-89. Ser-108 contacts 4-amino-2-methyl-5-(diphosphooxymethyl)pyrimidine. 134–136 contributes to the 2-[(2R,5Z)-2-carboxy-4-methylthiazol-5(2H)-ylidene]ethyl phosphate binding site; that stretch reads TQT. Lys-137 serves as a coordination point for 4-amino-2-methyl-5-(diphosphooxymethyl)pyrimidine. Residues Gly-166 and 186-187 each bind 2-[(2R,5Z)-2-carboxy-4-methylthiazol-5(2H)-ylidene]ethyl phosphate; that span reads VS.

This sequence belongs to the thiamine-phosphate synthase family. Requires Mg(2+) as cofactor.

It catalyses the reaction 2-[(2R,5Z)-2-carboxy-4-methylthiazol-5(2H)-ylidene]ethyl phosphate + 4-amino-2-methyl-5-(diphosphooxymethyl)pyrimidine + 2 H(+) = thiamine phosphate + CO2 + diphosphate. The enzyme catalyses 2-(2-carboxy-4-methylthiazol-5-yl)ethyl phosphate + 4-amino-2-methyl-5-(diphosphooxymethyl)pyrimidine + 2 H(+) = thiamine phosphate + CO2 + diphosphate. It carries out the reaction 4-methyl-5-(2-phosphooxyethyl)-thiazole + 4-amino-2-methyl-5-(diphosphooxymethyl)pyrimidine + H(+) = thiamine phosphate + diphosphate. Its pathway is cofactor biosynthesis; thiamine diphosphate biosynthesis; thiamine phosphate from 4-amino-2-methyl-5-diphosphomethylpyrimidine and 4-methyl-5-(2-phosphoethyl)-thiazole: step 1/1. Condenses 4-methyl-5-(beta-hydroxyethyl)thiazole monophosphate (THZ-P) and 2-methyl-4-amino-5-hydroxymethyl pyrimidine pyrophosphate (HMP-PP) to form thiamine monophosphate (TMP). The protein is Thiamine-phosphate synthase of Shigella sonnei (strain Ss046).